Consider the following 149-residue polypeptide: Deoxyuridine 5'-triphosphate nucleotidohydrolase (149 aa).

Residues R68–G70, N81, and L85–D87 each bind substrate.

It belongs to the dUTPase family. The cofactor is Mg(2+).

The catalysed reaction is dUTP + H2O = dUMP + diphosphate + H(+). It participates in pyrimidine metabolism; dUMP biosynthesis; dUMP from dCTP (dUTP route): step 2/2. This enzyme is involved in nucleotide metabolism: it produces dUMP, the immediate precursor of thymidine nucleotides and it decreases the intracellular concentration of dUTP so that uracil cannot be incorporated into DNA. This Nitrosomonas eutropha (strain DSM 101675 / C91 / Nm57) protein is Deoxyuridine 5'-triphosphate nucleotidohydrolase.